The following is a 624-amino-acid chain: Translocator protein BipB (624 aa).

Positions 54 to 99 (LASEQCDAQPVTDDARLDRLDDKPALRAPRSDAAHAADGNARGNGG) are disordered. Residues 66 to 88 (DDARLDRLDDKPALRAPRSDAAH) show a composition bias toward basic and acidic residues. The stretch at 313 to 343 (EMQAKREAELQKKSDEYQEQVKKAEEMQKTM) forms a coiled coil. 3 consecutive transmembrane segments (helical) span residues 359–379 (FAAA…GLAL), 405–425 (AILK…LVAC), and 434–454 (LAGA…AAFV).

Belongs to the SctE/SipB/YopB family.

Its subcellular location is the secreted. The protein resides in the host membrane. In terms of biological role, plays a role in the bacterium-induced formation of multinucleated giant cell (MNGC), which is formed after host cell fusion, as well as in the intercellular spreading of bacteria and in the induction of apoptosis in macrophages. May act in concert with other effector proteins to induce fusion of host cell membranes. The sequence is that of Translocator protein BipB (bipB) from Burkholderia thailandensis (strain ATCC 700388 / DSM 13276 / CCUG 48851 / CIP 106301 / E264).